A 241-amino-acid chain; its full sequence is 4-hydroxy-tetrahydrodipicolinate reductase (241 aa).

NAD(+)-binding positions include 80-82 and 104-107; these read ATT and SANM. Residue histidine 136 is the Proton donor/acceptor of the active site. Histidine 137 contacts (S)-2,3,4,5-tetrahydrodipicolinate. Residue lysine 140 is the Proton donor of the active site. 146-147 contacts (S)-2,3,4,5-tetrahydrodipicolinate; the sequence is GT.

Belongs to the DapB family.

Its subcellular location is the cytoplasm. The enzyme catalyses (S)-2,3,4,5-tetrahydrodipicolinate + NAD(+) + H2O = (2S,4S)-4-hydroxy-2,3,4,5-tetrahydrodipicolinate + NADH + H(+). It catalyses the reaction (S)-2,3,4,5-tetrahydrodipicolinate + NADP(+) + H2O = (2S,4S)-4-hydroxy-2,3,4,5-tetrahydrodipicolinate + NADPH + H(+). The protein operates within amino-acid biosynthesis; L-lysine biosynthesis via DAP pathway; (S)-tetrahydrodipicolinate from L-aspartate: step 4/4. Catalyzes the conversion of 4-hydroxy-tetrahydrodipicolinate (HTPA) to tetrahydrodipicolinate. The chain is 4-hydroxy-tetrahydrodipicolinate reductase from Staphylococcus haemolyticus (strain JCSC1435).